The chain runs to 236 residues: tRNA1(Val) (adenine(37)-N6)-methyltransferase (236 aa).

The protein belongs to the methyltransferase superfamily. tRNA (adenine-N(6)-)-methyltransferase family.

Its subcellular location is the cytoplasm. It carries out the reaction adenosine(37) in tRNA1(Val) + S-adenosyl-L-methionine = N(6)-methyladenosine(37) in tRNA1(Val) + S-adenosyl-L-homocysteine + H(+). Its function is as follows. Specifically methylates the adenine in position 37 of tRNA(1)(Val) (anticodon cmo5UAC). In Actinobacillus pleuropneumoniae serotype 7 (strain AP76), this protein is tRNA1(Val) (adenine(37)-N6)-methyltransferase.